Consider the following 472-residue polypeptide: Tryptophanase (472 aa).

Position 270 is an N6-(pyridoxal phosphate)lysine (K270).

This sequence belongs to the beta-eliminating lyase family. As to quaternary structure, homotetramer. Requires pyridoxal 5'-phosphate as cofactor.

It catalyses the reaction L-tryptophan + H2O = indole + pyruvate + NH4(+). Its pathway is amino-acid degradation; L-tryptophan degradation via pyruvate pathway; indole and pyruvate from L-tryptophan: step 1/1. The polypeptide is Tryptophanase (tnaA) (Vibrio cholerae serotype O1 (strain ATCC 39315 / El Tor Inaba N16961)).